Here is a 163-residue protein sequence, read N- to C-terminus: Phosphopantetheine adenylyltransferase (163 aa).

ATP-binding residues include Ser-10 and His-18. Ser-10 lines the substrate pocket. Substrate contacts are provided by Lys-42, Thr-75, and Arg-89. ATP contacts are provided by residues 90 to 92 (GIR), Glu-100, and 125 to 131 (YAHVSSS).

This sequence belongs to the bacterial CoaD family. Homohexamer. The cofactor is Mg(2+).

It localises to the cytoplasm. It carries out the reaction (R)-4'-phosphopantetheine + ATP + H(+) = 3'-dephospho-CoA + diphosphate. Its pathway is cofactor biosynthesis; coenzyme A biosynthesis; CoA from (R)-pantothenate: step 4/5. Its function is as follows. Reversibly transfers an adenylyl group from ATP to 4'-phosphopantetheine, yielding dephospho-CoA (dPCoA) and pyrophosphate. The chain is Phosphopantetheine adenylyltransferase from Enterococcus faecalis (strain ATCC 700802 / V583).